The following is a 508-amino-acid chain: Chromosomal replication initiator protein DnaA (508 aa).

The interval 1–91 is domain I, interacts with DnaA modulators; it reads MADDPGSSFT…TDALSRRLGQ (91 aa). The tract at residues 91–167 is domain II; the sequence is QQIQLGVRIA…AIDPAVAAGT (77 aa). A disordered region spans residues 104-152; the sequence is DDVEDALIPSAEPFPDTDADLSARRRTDSRASGERGAVTNTQPGWTNYF. The span at 124-136 shows a compositional bias: basic and acidic residues; the sequence is LSARRRTDSRASG. Residues 141–152 show a composition bias toward polar residues; sequence VTNTQPGWTNYF. A domain III, AAA+ region region spans residues 168-384; it reads SLNRRYTFDT…GALIRVTAFA (217 aa). Gly212, Gly214, Lys215, and Thr216 together coordinate ATP. The tract at residues 385–508 is domain IV, binds dsDNA; that stretch reads SLNKTPIDKS…TTRIRQRSKR (124 aa).

It belongs to the DnaA family. As to quaternary structure, oligomerizes as a right-handed, spiral filament on DNA at oriC.

It is found in the cytoplasm. Functionally, plays an essential role in the initiation and regulation of chromosomal replication. ATP-DnaA binds to the origin of replication (oriC) to initiate formation of the DNA replication initiation complex once per cell cycle. Binds the DnaA box (a 9 base pair repeat at the origin) and separates the double-stranded (ds)DNA. Forms a right-handed helical filament on oriC DNA; dsDNA binds to the exterior of the filament while single-stranded (ss)DNA is stabiized in the filament's interior. The ATP-DnaA-oriC complex binds and stabilizes one strand of the AT-rich DNA unwinding element (DUE), permitting loading of DNA polymerase. After initiation quickly degrades to an ADP-DnaA complex that is not apt for DNA replication. Binds acidic phospholipids. The protein is Chromosomal replication initiator protein DnaA of Mycobacterium avium.